The following is a 429-amino-acid chain: Glutamate-1-semialdehyde 2,1-aminomutase (429 aa).

Lys-265 bears the N6-(pyridoxal phosphate)lysine mark.

Belongs to the class-III pyridoxal-phosphate-dependent aminotransferase family. HemL subfamily. As to quaternary structure, homodimer. Pyridoxal 5'-phosphate is required as a cofactor.

It is found in the cytoplasm. It carries out the reaction (S)-4-amino-5-oxopentanoate = 5-aminolevulinate. The protein operates within porphyrin-containing compound metabolism; protoporphyrin-IX biosynthesis; 5-aminolevulinate from L-glutamyl-tRNA(Glu): step 2/2. In Chromohalobacter salexigens (strain ATCC BAA-138 / DSM 3043 / CIP 106854 / NCIMB 13768 / 1H11), this protein is Glutamate-1-semialdehyde 2,1-aminomutase.